A 37-amino-acid chain; its full sequence is uncharacterized protein (37 aa).

Residues 13-33 form a helical membrane-spanning segment; the sequence is TFLTIIVLLMIVFGIAIVALL.

It is found in the host membrane. This is an uncharacterized protein from Acidianus convivator (ABV).